The chain runs to 266 residues: Putative carbamate hydrolase RutD (266 aa).

It belongs to the AB hydrolase superfamily. Hydrolase RutD family.

The catalysed reaction is carbamate + 2 H(+) = NH4(+) + CO2. Involved in pyrimidine catabolism. May facilitate the hydrolysis of carbamate, a reaction that can also occur spontaneously. The sequence is that of Putative carbamate hydrolase RutD from Escherichia coli O127:H6 (strain E2348/69 / EPEC).